A 292-amino-acid chain; its full sequence is Calponin-1 (292 aa).

A Calponin-homology (CH) domain is found at 28–131 (PQTERQLRVW…STLIALASQA (104 aa)). Calponin-like repeat units follow at residues 164–189 (IGLQ…RHLY), 204–229 (ISLQ…RQIF), and 243–268 (IGLQ…RQVY). Thr170 is modified (phosphothreonine; by ROCK2). Residue Ser175 is modified to Phosphoserine; by PKC, CaMK2 and ROCK2. Phosphothreonine; by ROCK2 is present on residues Thr180 and Thr184. Thr184 carries the phosphothreonine; by PKC and CaMK2 modification. The calmodulin-binding stretch occupies residues 185-193 (RRHLYDPKL). At Thr259 the chain carries Phosphothreonine; by ROCK2.

It belongs to the calponin family. Post-translationally, phosphorylation by PKC or CaM kinase II reduces the binding of calponin to F-actin and tropomyosin. In terms of tissue distribution, smooth muscle, and tissues containing significant amounts of smooth muscle.

Its function is as follows. Thin filament-associated protein that is implicated in the regulation and modulation of smooth muscle contraction. It is capable of binding to actin, calmodulin and tropomyosin. The interaction of calponin with actin inhibits the actomyosin Mg-ATPase activity. This Gallus gallus (Chicken) protein is Calponin-1 (CNN1).